Here is a 285-residue protein sequence, read N- to C-terminus: Prephenate dehydratase (285 aa).

The Prephenate dehydratase domain maps to 2-183 (KVGYLGPAAT…NHTRFVILSP (182 aa)). The region spanning 204–281 (MVMLPQDDQS…CKVRLLGAYQ (78 aa)) is the ACT domain.

The enzyme catalyses prephenate + H(+) = 3-phenylpyruvate + CO2 + H2O. The protein operates within amino-acid biosynthesis; L-phenylalanine biosynthesis; phenylpyruvate from prephenate: step 1/1. This is Prephenate dehydratase (pheA) from Bacillus subtilis (strain 168).